A 185-amino-acid polypeptide reads, in one-letter code: Ribosome-recycling factor (185 aa).

Belongs to the RRF family.

The protein localises to the cytoplasm. Responsible for the release of ribosomes from messenger RNA at the termination of protein biosynthesis. May increase the efficiency of translation by recycling ribosomes from one round of translation to another. The chain is Ribosome-recycling factor from Lacticaseibacillus casei (strain BL23) (Lactobacillus casei).